The primary structure comprises 209 residues: Large ribosomal subunit protein uL4 (209 aa).

The segment at 45-78 (RQGTHKAKERAEVAGSTRKIKKQKGTGTARAGSA) is disordered.

This sequence belongs to the universal ribosomal protein uL4 family. In terms of assembly, part of the 50S ribosomal subunit.

Functionally, one of the primary rRNA binding proteins, this protein initially binds near the 5'-end of the 23S rRNA. It is important during the early stages of 50S assembly. It makes multiple contacts with different domains of the 23S rRNA in the assembled 50S subunit and ribosome. In terms of biological role, forms part of the polypeptide exit tunnel. The chain is Large ribosomal subunit protein uL4 from Flavobacterium psychrophilum (strain ATCC 49511 / DSM 21280 / CIP 103535 / JIP02/86).